A 388-amino-acid polypeptide reads, in one-letter code: Succinate--CoA ligase [ADP-forming] subunit beta (388 aa).

An ATP-grasp domain is found at K9–H244. Residues K46, G53 to G55, E99, S102, and E107 each bind ATP. Positions 199 and 213 each coordinate Mg(2+). Substrate-binding positions include N264 and G321 to V323.

It belongs to the succinate/malate CoA ligase beta subunit family. In terms of assembly, heterotetramer of two alpha and two beta subunits. Requires Mg(2+) as cofactor.

The catalysed reaction is succinate + ATP + CoA = succinyl-CoA + ADP + phosphate. The enzyme catalyses GTP + succinate + CoA = succinyl-CoA + GDP + phosphate. The protein operates within carbohydrate metabolism; tricarboxylic acid cycle; succinate from succinyl-CoA (ligase route): step 1/1. In terms of biological role, succinyl-CoA synthetase functions in the citric acid cycle (TCA), coupling the hydrolysis of succinyl-CoA to the synthesis of either ATP or GTP and thus represents the only step of substrate-level phosphorylation in the TCA. The beta subunit provides nucleotide specificity of the enzyme and binds the substrate succinate, while the binding sites for coenzyme A and phosphate are found in the alpha subunit. The protein is Succinate--CoA ligase [ADP-forming] subunit beta of Psychromonas ingrahamii (strain DSM 17664 / CCUG 51855 / 37).